We begin with the raw amino-acid sequence, 361 residues long: ATP-dependent 6-phosphofructokinase 1 (361 aa).

Residues G14, 79–80, and 116–119 each bind ATP; these read KG and GDGS. D117 provides a ligand contact to Mg(2+). Residues 140–142, R177, 184–186, E237, R278, and 284–287 contribute to the substrate site; these read TID, MGR, and HIQR. D142 functions as the Proton acceptor in the catalytic mechanism.

This sequence belongs to the phosphofructokinase type A (PFKA) family. Mixed-substrate PFK group III subfamily. Homodimer or homotetramer. Requires Mg(2+) as cofactor.

The protein localises to the cytoplasm. The enzyme catalyses beta-D-fructose 6-phosphate + ATP = beta-D-fructose 1,6-bisphosphate + ADP + H(+). Its pathway is carbohydrate degradation; glycolysis; D-glyceraldehyde 3-phosphate and glycerone phosphate from D-glucose: step 3/4. Catalyzes the phosphorylation of D-fructose 6-phosphate to fructose 1,6-bisphosphate by ATP, the first committing step of glycolysis. The protein is ATP-dependent 6-phosphofructokinase 1 of Synechocystis sp. (strain ATCC 27184 / PCC 6803 / Kazusa).